Here is a 506-residue protein sequence, read N- to C-terminus: BTB/POZ domain-containing protein At3g22104 (506 aa).

The region spanning 6-76 (SDLEVDINGE…CYNDGRVAVM (71 aa)) is the BTB domain. The region spanning 187–435 (TWWFDEVLVL…LDEQQQQQQQ (249 aa)) is the NPH3 domain. A coiled-coil region spans residues 421–492 (QAIETLDEQQ…MEVIKKRSKS (72 aa)). The interval 485-506 (VIKKRSKSSSKGSNRSLPKLCS) is disordered.

It belongs to the NPH3 family.

It functions in the pathway protein modification; protein ubiquitination. In terms of biological role, may act as a substrate-specific adapter of an E3 ubiquitin-protein ligase complex (CUL3-RBX1-BTB) which mediates the ubiquitination and subsequent proteasomal degradation of target proteins. The polypeptide is BTB/POZ domain-containing protein At3g22104 (Arabidopsis thaliana (Mouse-ear cress)).